Consider the following 276-residue polypeptide: Aspartate dehydrogenase domain-containing protein (276 aa).

It belongs to the L-aspartate dehydrogenase family.

The protein is Aspartate dehydrogenase domain-containing protein (aspdh) of Danio rerio (Zebrafish).